We begin with the raw amino-acid sequence, 237 residues long: Phosphatidylserine decarboxylase proenzyme (237 aa).

S206 acts as the Schiff-base intermediate with substrate; via pyruvic acid in catalysis. At S206 the chain carries Pyruvic acid (Ser); by autocatalysis.

This sequence belongs to the phosphatidylserine decarboxylase family. PSD-A subfamily. In terms of assembly, heterodimer of a large membrane-associated beta subunit and a small pyruvoyl-containing alpha subunit. Requires pyruvate as cofactor. In terms of processing, is synthesized initially as an inactive proenzyme. Formation of the active enzyme involves a self-maturation process in which the active site pyruvoyl group is generated from an internal serine residue via an autocatalytic post-translational modification. Two non-identical subunits are generated from the proenzyme in this reaction, and the pyruvate is formed at the N-terminus of the alpha chain, which is derived from the carboxyl end of the proenzyme. The post-translation cleavage follows an unusual pathway, termed non-hydrolytic serinolysis, in which the side chain hydroxyl group of the serine supplies its oxygen atom to form the C-terminus of the beta chain, while the remainder of the serine residue undergoes an oxidative deamination to produce ammonia and the pyruvoyl prosthetic group on the alpha chain.

It is found in the cell membrane. It catalyses the reaction a 1,2-diacyl-sn-glycero-3-phospho-L-serine + H(+) = a 1,2-diacyl-sn-glycero-3-phosphoethanolamine + CO2. Its pathway is phospholipid metabolism; phosphatidylethanolamine biosynthesis; phosphatidylethanolamine from CDP-diacylglycerol: step 2/2. Its function is as follows. Catalyzes the formation of phosphatidylethanolamine (PtdEtn) from phosphatidylserine (PtdSer). This Rhodococcus opacus (strain B4) protein is Phosphatidylserine decarboxylase proenzyme.